A 676-amino-acid chain; its full sequence is RNA helicase NPH-II (676 aa).

The region spanning 172–347 (FLAWISHRPV…IFLPNPAFIH (176 aa)) is the Helicase ATP-binding domain. ATP is bound at residue 185-192 (GGTGVGKT). Positions 296–299 (DEVH) match the DEXH box motif. The region spanning 366–535 (NPSSRMAYIE…NYILYANKFN (170 aa)) is the Helicase C-terminal domain.

It belongs to the DEAD box helicase family. DEAH subfamily. In terms of assembly, monomer.

It is found in the virion. It carries out the reaction ATP + H2O = ADP + phosphate + H(+). In terms of biological role, NTP-dependent helicase that catalyzes unidirectional unwinding of 3'tailed duplex RNAs and plays an important role during transcription of early mRNAs, presumably by preventing R-loop formation behind the elongating RNA polymerase. Might also play a role in the export of newly synthesized mRNA chains out of the core into the cytoplasm. Required for replication and propagation of viral particles. This chain is RNA helicase NPH-II (OPG084), found in Monkeypox virus.